The sequence spans 90 residues: MANIKSSEKDIRRTKRRNAANSQNRSRLRTQAKKILKAIKEKDPKAAMALFIEYTSFLDKAAKTNLIHSKNADRKKSRMAKRLNAVFAAA.

Over residues 1–11 (MANIKSSEKDI) the composition is skewed to basic and acidic residues. The tract at residues 1-29 (MANIKSSEKDIRRTKRRNAANSQNRSRLR) is disordered.

The protein belongs to the bacterial ribosomal protein bS20 family.

Binds directly to 16S ribosomal RNA. This chain is Small ribosomal subunit protein bS20, found in Leptospira borgpetersenii serovar Hardjo-bovis (strain JB197).